A 241-amino-acid chain; its full sequence is Uridylate kinase (241 aa).

15–18 (KLSG) contributes to the ATP binding site. Positions 23-28 (GTEGFG) are involved in allosteric activation by GTP. Residue Gly57 participates in UMP binding. ATP contacts are provided by Gly58 and Arg62. Residues Asp77 and 138-145 (TGNPFFTT) each bind UMP. ATP contacts are provided by Thr165, Phe171, and Asp174.

The protein belongs to the UMP kinase family. In terms of assembly, homohexamer.

The protein resides in the cytoplasm. The enzyme catalyses UMP + ATP = UDP + ADP. The protein operates within pyrimidine metabolism; CTP biosynthesis via de novo pathway; UDP from UMP (UMPK route): step 1/1. Its activity is regulated as follows. Allosterically activated by GTP. Inhibited by UTP. Functionally, catalyzes the reversible phosphorylation of UMP to UDP. This is Uridylate kinase from Shigella dysenteriae serotype 1 (strain Sd197).